We begin with the raw amino-acid sequence, 131 residues long: Putative protein PTGES3L (131 aa).

Residues 3–91 enclose the CS domain; that stretch reads RQPARTLWYD…KEKVAWPRLT (89 aa).

This sequence belongs to the p23/wos2 family.

In Mus musculus (Mouse), this protein is Putative protein PTGES3L (Ptges3l).